The chain runs to 229 residues: Lipoprotein-releasing system ATP-binding protein LolD (229 aa).

Residues 6–226 enclose the ABC transporter domain; it reads LELKSVDRHY…TLSDGRVVEL (221 aa). An ATP-binding site is contributed by 42–49; that stretch reads APSGTGKS.

Belongs to the ABC transporter superfamily. Lipoprotein translocase (TC 3.A.1.125) family. The complex is composed of two ATP-binding proteins (LolD) and two transmembrane proteins (LolC and LolE).

It is found in the cell inner membrane. In terms of biological role, part of the ABC transporter complex LolCDE involved in the translocation of mature outer membrane-directed lipoproteins, from the inner membrane to the periplasmic chaperone, LolA. Responsible for the formation of the LolA-lipoprotein complex in an ATP-dependent manner. This chain is Lipoprotein-releasing system ATP-binding protein LolD, found in Chelativorans sp. (strain BNC1).